The following is a 242-amino-acid chain: Zinc-finger homeodomain protein 11 (242 aa).

The ZF-HD dimerization-type; degenerate zinc-finger motif lies at 31-82 (YKECLKNHAANLGGHALDGCGEFMPSPTATSTDPSSLRCAACGCHRNFHRRD). Disordered stretches follow at residues 83 to 109 (PSEN…SRHV) and 135 to 161 (PGPS…RTRT). Positions 156-213 (RKRTRTKFTPEQKIKMRAFAEKAGWKINGCDEKSVREFCNEVGIERGVLKVWMHNNKY) form a DNA-binding region, homeobox; atypical.

As to quaternary structure, homo- and heterodimer with other ZFHD proteins. Interacts with HIPP20, HIPP21, HIPP22, HIPP23, HIPP24, HIPP26, HIPP27, HIPP30 and MED25 (via ACID domain). Interacts with NAC019, NAC055 and NAC072 (via NAC binding domain). Binds to ZHD1, ZHD2, ZHD3, ZHD4, ZHD5, ZHD6, ZHD7, ZHD8, ZHD9, ZHD12, ZHD13 and ZHD14. In terms of tissue distribution, expressed in roots, inflorescences, open flowers and seeds. Detected in stems and seedlings.

The protein resides in the nucleus. In terms of biological role, transcription factor involved in the up-regulation of several stress-inducible genes. Acts as a transcriptional activator by interacting with MED25 and NAC proteins. Involved in increased drought tolerance. This chain is Zinc-finger homeodomain protein 11 (ZHD11), found in Arabidopsis thaliana (Mouse-ear cress).